The sequence spans 429 residues: Glutamate-1-semialdehyde 2,1-aminomutase 1 (429 aa).

K268 is subject to N6-(pyridoxal phosphate)lysine.

Belongs to the class-III pyridoxal-phosphate-dependent aminotransferase family. HemL subfamily. As to quaternary structure, homodimer. It depends on pyridoxal 5'-phosphate as a cofactor.

Its subcellular location is the cytoplasm. It catalyses the reaction (S)-4-amino-5-oxopentanoate = 5-aminolevulinate. The protein operates within porphyrin-containing compound metabolism; protoporphyrin-IX biosynthesis; 5-aminolevulinate from L-glutamyl-tRNA(Glu): step 2/2. This chain is Glutamate-1-semialdehyde 2,1-aminomutase 1, found in Listeria monocytogenes serotype 4b (strain F2365).